A 497-amino-acid polypeptide reads, in one-letter code: MTAEKLVVYNTLTRKKEVFEPIHAPHVGMYVCGPTVYGEGHLGHARSAITFDIVFRYLQHLKYQVRYVRNITDVGHLEHDADEGEDKIAKKAKLEKVEPMEIVQRYTEYYHDALRKLNVLPPSIEPTASGHIPEQIRMVEEILSSGYAYENTGSVYFDVEKFTNDKNKYGHLSGRILEDLISGTRSLDGQHTKKSSADFALWKLASPEHIMKWDSPWGKGFPGWHLECSAMSTKYLGETFDIHGGGMDLMFPHHECEIAQSVAANKKEPAKYWLHNNMITINGQKMGKSLGNFITLNELFTGNHTLLEQAYSPMTIRFFTLQAHYRSTLDFSNDALKAANKAFRKVMNGMKMLNSLEYSTDIVEQDQALNDEINKIIADCYKGMSDDFNTAITIASLFNLIKKINVFYLQQKSTAVLSKETFEHMKTSYTTLVHDVLGLVDEVAVNPEGLIKGLLDLYKEAKENKQYDKVDQIRAYFKQQGLAIKDMKHGIDWAYEE.

Residue Cys32 coordinates Zn(2+). The 'HIGH' region signature appears at 34–44; the sequence is PTVYGEGHLGH. Positions 228, 253, and 257 each coordinate Zn(2+). The 'KMSKS' region motif lies at 285–289; that stretch reads KMGKS. Lys288 lines the ATP pocket.

Belongs to the class-I aminoacyl-tRNA synthetase family. Monomer. Zn(2+) serves as cofactor.

It is found in the cytoplasm. The enzyme catalyses tRNA(Cys) + L-cysteine + ATP = L-cysteinyl-tRNA(Cys) + AMP + diphosphate. This Cytophaga hutchinsonii (strain ATCC 33406 / DSM 1761 / CIP 103989 / NBRC 15051 / NCIMB 9469 / D465) protein is Cysteine--tRNA ligase.